Consider the following 292-residue polypeptide: ATP synthase gamma chain (292 aa).

It belongs to the ATPase gamma chain family. F-type ATPases have 2 components, CF(1) - the catalytic core - and CF(0) - the membrane proton channel. CF(1) has five subunits: alpha(3), beta(3), gamma(1), delta(1), epsilon(1). CF(0) has three main subunits: a, b and c.

The protein localises to the cell inner membrane. In terms of biological role, produces ATP from ADP in the presence of a proton gradient across the membrane. The gamma chain is believed to be important in regulating ATPase activity and the flow of protons through the CF(0) complex. This is ATP synthase gamma chain from Chlorobaculum parvum (strain DSM 263 / NCIMB 8327) (Chlorobium vibrioforme subsp. thiosulfatophilum).